A 204-amino-acid chain; its full sequence is LexA repressor (204 aa).

Residues 28-48 (RAEIANRLGFKSANAAEEHLK) constitute a DNA-binding region (H-T-H motif). Active-site for autocatalytic cleavage activity residues include S121 and K158.

It belongs to the peptidase S24 family. As to quaternary structure, homodimer.

The catalysed reaction is Hydrolysis of Ala-|-Gly bond in repressor LexA.. Functionally, represses a number of genes involved in the response to DNA damage (SOS response), including recA and lexA. In the presence of single-stranded DNA, RecA interacts with LexA causing an autocatalytic cleavage which disrupts the DNA-binding part of LexA, leading to derepression of the SOS regulon and eventually DNA repair. This chain is LexA repressor, found in Shewanella frigidimarina (strain NCIMB 400).